We begin with the raw amino-acid sequence, 314 residues long: MPLTNTQIRYYDSNVLRLPKDKRETYNAQVDRLITALRKKLKDQDKITIKRVVKAGSFAKHTILRKTSDSQVDVDVVFYVSGEKVAEETFASLSEKIYEALLKMYPNKAVEDFEIQRKAATVSFVGTGLDVDIVPVIENPDKEGYGWQFDRIDGSKTETCAPCQIKFVKERKDQDPDFRTLVRLAKRWRTNMECPLKSFHIELIMAHVLEVNGKDGSLEKRFRDFLLYIAESGLKEVITFPENSTIPAFSHPVVILDPVCDTNNVTSRITEDERKEIVRIAEKSWATANFASVEGDYDIWKELFGRSFKVEDAA.

Residue Lys60 participates in ATP binding. Mg(2+)-binding residues include Asp73 and Asp75. Residues Asp75, Lys186, 197 to 199 (KSF), and Asn263 each bind ATP.

It belongs to the CD-NTase family. C01 subfamily. Forms complexes with Cap7 with 1:1 and 2:2 stoichimetry, and a 1:1:6 CdnC:Cap7:Cap6 complex. It depends on Mg(2+) as a cofactor.

Its function is as follows. Cyclic nucleotide synthase (second messenger synthase) of a CBASS antivirus system. CBASS (cyclic oligonucleotide-based antiphage signaling system) provides immunity against bacteriophage. The CD-NTase protein synthesizes cyclic nucleotides in response to infection; these serve as specific second messenger signals. The signals activate a diverse range of effectors, leading to bacterial cell death and thus abortive phage infection. A type III CBASS system. Expression of this CBASS system (Cap18-Cap6-Cap7-CdnC-CapW-Cap17) in a susceptible E.coli (strain MG1655) confers resistance to bacteriophage P1. Probable cyclic nucleotide synthase that upon activation catalyzes the synthesis of a cyclic nucleotide. A cyclase activity for this enzyme was not identified in. The polypeptide is CBASS oligonucleotide cyclase CdnC (Escherichia coli (strain KTE188)).